The following is a 148-amino-acid chain: Large ribosomal subunit protein bL9 (148 aa).

This sequence belongs to the bacterial ribosomal protein bL9 family.

Its function is as follows. Binds to the 23S rRNA. In Azotobacter vinelandii (strain DJ / ATCC BAA-1303), this protein is Large ribosomal subunit protein bL9.